A 382-amino-acid chain; its full sequence is MPQRQPQPAHPADGIYFGLMSGTSMDGVDGVAVRFEAGRAPVVLAEAFVGFAQSLRDALFALQQPGDNEIDRESLAANALVARYAVCCHELQRTAGLSRDEIRAIGVHGQTVRHRPERGYTRQLNNPALLAELTQVDVIADFRSRDVAAGGHGAPLAPAFHATVFGAPGETRVVCNLGGISNITILPGGDGDVRGFDCGPANALIDAWATRHLGKPYDDGGKFAARGTVQASLLDALLDEPYFTAPPPKSTGRDLFNPAWLDARLAAFPQVAPEDVQATLTALTAVSVAREIAQHAPGCKAVFVCGGGARNPVLLDALRHALREAGVPASVDTTAALGVPPQQVEALAFAWLAYRFTARQPGNLATVTGAAGNRVLGALYPR.

Position 22-29 (glycine 22–aspartate 29) interacts with ATP.

Belongs to the anhydro-N-acetylmuramic acid kinase family.

The catalysed reaction is 1,6-anhydro-N-acetyl-beta-muramate + ATP + H2O = N-acetyl-D-muramate 6-phosphate + ADP + H(+). It functions in the pathway amino-sugar metabolism; 1,6-anhydro-N-acetylmuramate degradation. Its pathway is cell wall biogenesis; peptidoglycan recycling. Catalyzes the specific phosphorylation of 1,6-anhydro-N-acetylmuramic acid (anhMurNAc) with the simultaneous cleavage of the 1,6-anhydro ring, generating MurNAc-6-P. Is required for the utilization of anhMurNAc either imported from the medium or derived from its own cell wall murein, and thus plays a role in cell wall recycling. The chain is Anhydro-N-acetylmuramic acid kinase from Burkholderia orbicola (strain MC0-3).